A 215-amino-acid chain; its full sequence is Urease accessory protein UreE (215 aa).

The interval 134–215 (FDPEGGAYAP…HGHSHKHDHK (82 aa)) is disordered. Basic and acidic residues predominate over residues 164–206 (GHHDHADHEHDHKHDHGKHDHAGHDHAHDHHVHDEHCGHDHGH).

Belongs to the UreE family.

It is found in the cytoplasm. Functionally, involved in urease metallocenter assembly. Binds nickel. Probably functions as a nickel donor during metallocenter assembly. In Rhodopseudomonas palustris (strain HaA2), this protein is Urease accessory protein UreE.